Reading from the N-terminus, the 204-residue chain is Glycerol-3-phosphate acyltransferase (204 aa).

The next 5 membrane-spanning stretches (helical) occupy residues 6 to 26 (YIII…YIVA), 80 to 100 (LVGI…VAGH), 122 to 142 (LAVN…VVAI), 144 to 164 (KYVS…MIMV), and 168 to 188 (AGLI…RANI).

This sequence belongs to the PlsY family. In terms of assembly, probably interacts with PlsX.

It is found in the cell membrane. The catalysed reaction is an acyl phosphate + sn-glycerol 3-phosphate = a 1-acyl-sn-glycero-3-phosphate + phosphate. The protein operates within lipid metabolism; phospholipid metabolism. Catalyzes the transfer of an acyl group from acyl-phosphate (acyl-PO(4)) to glycerol-3-phosphate (G3P) to form lysophosphatidic acid (LPA). This enzyme utilizes acyl-phosphate as fatty acyl donor, but not acyl-CoA or acyl-ACP. The protein is Glycerol-3-phosphate acyltransferase of Clostridioides difficile (strain 630) (Peptoclostridium difficile).